Consider the following 263-residue polypeptide: Reductase pytE (263 aa).

It belongs to the avfA family.

It functions in the pathway secondary metabolite biosynthesis. Reductase; part of the gene cluster that mediates the biosynthesis of pyranterreones, a family of antioxidative compounds. The first step of pyranonigrins biosynthesis is performed by the hybrid PKS-NRPS synthetase pytA that condenses 4 malonyl-CoA units ato the acetyl starter unit by the modular PKS of pytA. The acyl chain is then connected to an L-serine through the amide bond by the modular NRPS of pytA. A tetramic acid is formed and released from the PKS-NRPS pytA to give pyranterreone 5 with the help of the thioesterase pytI. Pyranterreone 5 could be methylated by pytC to afford pyranterreone 6. Both pyranterreones 5 and 6 are subsequently oxidized by the FAD-linked oxidoreductase pytB and the cytochrome P450 monooxygenase pytD to form the fused gamma-pyrone core, resulting in pyranterreones 7 and 11, respectively. The hydroxy group at C-8 of pyranterreones 7 and 11 are dehydrated by the aspartyl protease pytH to form a delta-7 double bond to give pyranterreones 3 and 1, 2 accordingly. The exo-methylene of pyranterreone 3 could be reduced into a pendant methyl by reductase pytE to provide pyranterreone 4, also known as cordylactam. Pyranterreone 4 can be reconverted to pyranterreone 3 through pytB-catalyzed dehydrogenation or further oxidized to pyranterreones 9 and 10. This is Reductase pytE from Aspergillus terreus.